We begin with the raw amino-acid sequence, 345 residues long: Protein-glutamate methylesterase/protein-glutamine glutaminase 2 (345 aa).

The Response regulatory domain occupies 1 to 116 (MVVDDSAVVR…KQFLVDASDD (116 aa)). Position 50 is a 4-aspartylphosphate (D50). The 192-residue stretch at 154–345 (LQTTERVVAL…AREIMAQMAG (192 aa)) folds into the CheB-type methylesterase domain. Residues S166, H192, and D288 contribute to the active site.

The protein belongs to the CheB family. Phosphorylated by CheA. Phosphorylation of the N-terminal regulatory domain activates the methylesterase activity.

The protein resides in the cytoplasm. It catalyses the reaction [protein]-L-glutamate 5-O-methyl ester + H2O = L-glutamyl-[protein] + methanol + H(+). The enzyme catalyses L-glutaminyl-[protein] + H2O = L-glutamyl-[protein] + NH4(+). Its function is as follows. Involved in chemotaxis. Part of a chemotaxis signal transduction system that modulates chemotaxis in response to various stimuli. Catalyzes the demethylation of specific methylglutamate residues introduced into the chemoreceptors (methyl-accepting chemotaxis proteins or MCP) by CheR. Also mediates the irreversible deamidation of specific glutamine residues to glutamic acid. In Albidiferax ferrireducens (strain ATCC BAA-621 / DSM 15236 / T118) (Rhodoferax ferrireducens), this protein is Protein-glutamate methylesterase/protein-glutamine glutaminase 2.